We begin with the raw amino-acid sequence, 1546 residues long: Hybrid signal transduction histidine kinase D (1546 aa).

The stretch at 36 to 63 forms a coiled coil; the sequence is MRKQKPDHEKTREELIEEINHLRAVSNS. The 67-residue stretch at 65-131 folds into the PAS domain; it reads KNARIMLDEM…NIDNVREAVH (67 aa). The PAC domain maps to 139-193; that stretch reads IRYETEIFGKSAGTEKITIDFSLMPLFNDKGEVSLILPEGRNITEKRLGELEIER. One can recognise a Histidine kinase 1 domain in the interval 218–440; that stretch reads NVSHELRTPL…QFTLRLPLTP (223 aa). Histidine 221 carries the phosphohistidine; by autocatalysis modification. In terms of domain architecture, Response regulatory 1 spans 571 to 686; the sequence is IVLVVEDNPE…ELVARVVNLM (116 aa). Aspartate 619 is subject to 4-aspartylphosphate. The region spanning 747 to 1010 is the Histidine kinase 2 domain; that stretch reads NLSHELRTPL…QFTVVLPIIK (264 aa). Histidine 750 bears the Phosphohistidine; by autocatalysis mark. Composition is skewed to low complexity over residues 1013–1031 and 1042–1146; these read SSSN…SPPL and NYIN…SNNN. Disordered stretches follow at residues 1013 to 1148, 1266 to 1285, and 1313 to 1350; these read SSSN…NNEK, NNSN…PPSS, and PLSE…KANS. Residues 1313-1346 show a composition bias toward low complexity; it reads PLSELKSSSNNNNNNNNNSNNNNNNSMSPNLRSP. Positions 1359–1483 constitute a Response regulatory 2 domain; sequence QIMLVDDLEE…ELSNSILTLI (125 aa). Aspartate 1412 bears the 4-aspartylphosphate mark. Positions 1500–1546 are disordered; the sequence is QNNNNNNNNNNNNNNNNNNNNNNINNGNDDDSLLLTDSRPCKKANSQ. Positions 1501 to 1526 are enriched in low complexity; it reads NNNNNNNNNNNNNNNNNNNNNNINNG.

The enzyme catalyses ATP + protein L-histidine = ADP + protein N-phospho-L-histidine.. Acts as a receptor histidine kinase for a signal transduction pathway. This protein undergoes an ATP-dependent autophosphorylation at a conserved histidine residue in the kinase core, and a phosphoryl group is then transferred to a conserved aspartate residue in the receiver domain. In Dictyostelium discoideum (Social amoeba), this protein is Hybrid signal transduction histidine kinase D (dhkD).